The chain runs to 91 residues: Small ribosomal subunit protein uS19 (91 aa).

This sequence belongs to the universal ribosomal protein uS19 family.

Functionally, protein S19 forms a complex with S13 that binds strongly to the 16S ribosomal RNA. The chain is Small ribosomal subunit protein uS19 from Paraburkholderia phymatum (strain DSM 17167 / CIP 108236 / LMG 21445 / STM815) (Burkholderia phymatum).